A 354-amino-acid chain; its full sequence is Putative ankyrin repeat protein L284 (354 aa).

ANK repeat units lie at residues 201–230 (ILDD…LSND), 253–284 (SRYP…NPIV), and 286–314 (LHKA…DIDI).

The chain is Putative ankyrin repeat protein L284 from Acanthamoeba polyphaga (Amoeba).